The sequence spans 449 residues: 23S rRNA (uracil(1939)-C(5))-methyltransferase RlmD (449 aa).

In terms of domain architecture, TRAM spans 12–70; the sequence is SKQLSAKQSFSVHQLDHLGAGIAQHQGKVVFIPGALPSETVQAQLTEQKKNYARAKLIK. [4Fe-4S] cluster is bound by residues C83, C89, C92, and C170. Residues Q282, F311, N316, E332, D359, and D379 each contribute to the S-adenosyl-L-methionine site. Residue C405 is the Nucleophile of the active site.

It belongs to the class I-like SAM-binding methyltransferase superfamily. RNA M5U methyltransferase family. RlmD subfamily.

It catalyses the reaction uridine(1939) in 23S rRNA + S-adenosyl-L-methionine = 5-methyluridine(1939) in 23S rRNA + S-adenosyl-L-homocysteine + H(+). Catalyzes the formation of 5-methyl-uridine at position 1939 (m5U1939) in 23S rRNA. In Shewanella sp. (strain MR-4), this protein is 23S rRNA (uracil(1939)-C(5))-methyltransferase RlmD.